The following is a 598-amino-acid chain: UvrABC system protein C (598 aa).

Residues 14–91 (DSPGCYLHKD…IQKNMPKYNI (78 aa)) form the GIY-YIG domain. The region spanning 196–231 (DKIIEDLRSKMLAASKEMAFERAAEYRDLISGIATM) is the UVR domain.

It belongs to the UvrC family. In terms of assembly, interacts with UvrB in an incision complex.

Its subcellular location is the cytoplasm. Its function is as follows. The UvrABC repair system catalyzes the recognition and processing of DNA lesions. UvrC both incises the 5' and 3' sides of the lesion. The N-terminal half is responsible for the 3' incision and the C-terminal half is responsible for the 5' incision. The chain is UvrABC system protein C from Streptococcus pyogenes serotype M1.